The sequence spans 410 residues: Arginine biosynthesis bifunctional protein ArgJ (410 aa).

6 residues coordinate substrate: Thr-158, Lys-184, Thr-195, Glu-282, Asn-405, and Thr-410. The active-site Nucleophile is Thr-195.

It belongs to the ArgJ family. As to quaternary structure, heterotetramer of two alpha and two beta chains.

Its subcellular location is the cytoplasm. The catalysed reaction is N(2)-acetyl-L-ornithine + L-glutamate = N-acetyl-L-glutamate + L-ornithine. It carries out the reaction L-glutamate + acetyl-CoA = N-acetyl-L-glutamate + CoA + H(+). It participates in amino-acid biosynthesis; L-arginine biosynthesis; L-ornithine and N-acetyl-L-glutamate from L-glutamate and N(2)-acetyl-L-ornithine (cyclic): step 1/1. Its pathway is amino-acid biosynthesis; L-arginine biosynthesis; N(2)-acetyl-L-ornithine from L-glutamate: step 1/4. Catalyzes two activities which are involved in the cyclic version of arginine biosynthesis: the synthesis of N-acetylglutamate from glutamate and acetyl-CoA as the acetyl donor, and of ornithine by transacetylation between N(2)-acetylornithine and glutamate. This chain is Arginine biosynthesis bifunctional protein ArgJ, found in Rhodopirellula baltica (strain DSM 10527 / NCIMB 13988 / SH1).